A 98-amino-acid polypeptide reads, in one-letter code: MPSISININLAFAAALLGMLMFRSHMMSSLLCLEGMMLSMFTLSTLIILNLQLTMSFTMPILLLVFAACEAAIGLALLVTVSNNYGLDYIQNLNLLQC.

The next 3 helical transmembrane spans lie at 2 to 22 (PSIS…MLMF), 29 to 49 (SLLC…LIIL), and 61 to 81 (ILLL…LVTV).

It belongs to the complex I subunit 4L family. In terms of assembly, core subunit of respiratory chain NADH dehydrogenase (Complex I) which is composed of 45 different subunits.

Its subcellular location is the mitochondrion inner membrane. It carries out the reaction a ubiquinone + NADH + 5 H(+)(in) = a ubiquinol + NAD(+) + 4 H(+)(out). Functionally, core subunit of the mitochondrial membrane respiratory chain NADH dehydrogenase (Complex I) which catalyzes electron transfer from NADH through the respiratory chain, using ubiquinone as an electron acceptor. Part of the enzyme membrane arm which is embedded in the lipid bilayer and involved in proton translocation. The protein is NADH-ubiquinone oxidoreductase chain 4L (MT-ND4L) of Microcebus mamiratra (Claire's mouse lemur).